We begin with the raw amino-acid sequence, 226 residues long: Large ribosomal subunit protein uL4 (226 aa).

Residues 47-74 (GTAKAKTRSEVSGGGRKPWPQKHTGRAR) are disordered.

The protein belongs to the universal ribosomal protein uL4 family. As to quaternary structure, part of the 50S ribosomal subunit.

Functionally, one of the primary rRNA binding proteins, this protein initially binds near the 5'-end of the 23S rRNA. It is important during the early stages of 50S assembly. It makes multiple contacts with different domains of the 23S rRNA in the assembled 50S subunit and ribosome. Its function is as follows. Forms part of the polypeptide exit tunnel. This is Large ribosomal subunit protein uL4 from Kosmotoga olearia (strain ATCC BAA-1733 / DSM 21960 / TBF 19.5.1).